A 318-amino-acid chain; its full sequence is NADH-ubiquinone oxidoreductase chain 1 (318 aa).

A run of 8 helical transmembrane segments spans residues 2–22 (FMINILMLIIPILLAVAFLTL), 70–90 (MFILAPIMALGLALTMWIPLP), 100–120 (LGVLFMLAMSSLAVYSILWSG), 147–167 (AIILLSVLLMSGSFTLSTLII), 172–192 (MWLILPAWPLAMMWFISTLAE), 222–242 (LFFMAEYANIIMMNIFTAILF), 253–273 (ELYTINFTIKSLLLTMSFLWI), and 294–314 (LPLTLALCMWHVSLPILTSGI).

It belongs to the complex I subunit 1 family. As to quaternary structure, core subunit of respiratory chain NADH dehydrogenase (Complex I) which is composed of 45 different subunits.

Its subcellular location is the mitochondrion inner membrane. It carries out the reaction a ubiquinone + NADH + 5 H(+)(in) = a ubiquinol + NAD(+) + 4 H(+)(out). Functionally, core subunit of the mitochondrial membrane respiratory chain NADH dehydrogenase (Complex I) which catalyzes electron transfer from NADH through the respiratory chain, using ubiquinone as an electron acceptor. Essential for the catalytic activity and assembly of complex I. The chain is NADH-ubiquinone oxidoreductase chain 1 (MT-ND1) from Bos indicus (Zebu).